Reading from the N-terminus, the 230-residue chain is Sugar fermentation stimulation protein homolog (230 aa).

This sequence belongs to the SfsA family.

In Clostridium perfringens (strain SM101 / Type A), this protein is Sugar fermentation stimulation protein homolog.